A 273-amino-acid chain; its full sequence is SPRY domain-containing SOCS box protein 1 (273 aa).

Tyrosine 31 bears the Phosphotyrosine; by MET mark. Residues 33–231 (KPTRLDLLLD…IRMRYLNGLD (199 aa)) form the B30.2/SPRY domain. One can recognise an SOCS box domain in the interval 232-273 (PEPLPLMDLCRRSVRLALGRERLGEIHTLPLPASLKAYLLYQ).

The protein belongs to the SPSB family. Component of the probable ECS(SPSB1) E3 ubiquitin-protein ligase complex which contains CUL5, RNF7/RBX2, Elongin BC complex and SPSB1. Interacts with CUL5, RNF7, ELOB and ELOC. Directly interacts with MET tyrosine kinase domain in the presence and in the absence of HGF, however HGF treatment has a positive effect on this interaction. When phosphorylated, interacts with RASA1 without affecting its stability. Interacts (via B30.2/SPRY domain) with PAWR; this interaction is direct and occurs in association with the Elongin BC complex. Interacts with NOS2. Interacts with EPHB2.

Its subcellular location is the cytoplasm. The protein localises to the cytosol. Its pathway is protein modification; protein ubiquitination. Functionally, substrate recognition component of a SCF-like ECS (Elongin BC-CUL2/5-SOCS-box protein) E3 ubiquitin-protein ligase complex which mediates the ubiquitination and subsequent proteasomal degradation of target proteins. Negatively regulates nitric oxide (NO) production and limits cellular toxicity in activated macrophages by mediating the ubiquitination and proteasomal degradation of NOS2. Acts as a bridge which links NOS2 with the ECS E3 ubiquitin ligase complex components ELOC and CUL5. This is SPRY domain-containing SOCS box protein 1 (SPSB1) from Homo sapiens (Human).